The sequence spans 489 residues: Ribulose-1,5 bisphosphate carboxylase/oxygenase large subunit N-methyltransferase, chloroplastic (489 aa).

The N-terminal 37 residues, 1–37 (MATIFSGGSVSPFLFHTNKGTSFTPKAPILHLKRSFS), are a transit peptide targeting the chloroplast. Residues 64-288 (EGVITAKTPV…AGEQVYIQYD (225 aa)) enclose the SET domain. S-adenosyl-L-methionine is bound by residues 80-82 (EGL) and arginine 222. Residues arginine 222, arginine 226, and aspartate 239 each coordinate substrate. An S-adenosyl-L-methionine-binding site is contributed by 242–243 (NH). Substrate contacts are provided by tyrosine 254, tyrosine 287, and tyrosine 300.

The protein belongs to the class V-like SAM-binding methyltransferase superfamily. Plant protein-lysine LSMT methyltransferase family. As to quaternary structure, homotrimer. As to expression, highly expressed in leaf.

The protein localises to the plastid. It localises to the chloroplast. It carries out the reaction L-lysyl-[ribulose-1,5-bisphosphate carboxylase] + 3 S-adenosyl-L-methionine = N(6),N(6),N(6)-trimethyl-L-lysyl-[ribulose-1,5-bisphosphate carboxylase] + 3 S-adenosyl-L-homocysteine + 3 H(+). The catalysed reaction is [fructose-bisphosphate aldolase]-L-lysine + 3 S-adenosyl-L-methionine = [fructose-bisphosphate aldolase]-N(6),N(6),N(6)-trimethyl-L-lysine + 3 S-adenosyl-L-homocysteine + 3 H(+). Methylates 'Lys-14' of the large subunit of RuBisCO. Can also use with lower efficiency chloroplastic fructose-bisphosphate aldolases and gamma-tocopherol methyltransferase as substrates, but not a cytosolic aldolase. The polypeptide is Ribulose-1,5 bisphosphate carboxylase/oxygenase large subunit N-methyltransferase, chloroplastic (RBCMT) (Pisum sativum (Garden pea)).